The primary structure comprises 230 residues: Ureidoacrylate amidohydrolase RutB (230 aa).

Asp-23 functions as the Proton acceptor in the catalytic mechanism. Residue Lys-132 is part of the active site. Catalysis depends on Cys-165, which acts as the Nucleophile.

It belongs to the isochorismatase family. RutB subfamily.

The catalysed reaction is (Z)-3-ureidoacrylate + H2O + H(+) = (Z)-3-aminoacrylate + NH4(+) + CO2. It catalyses the reaction (Z)-3-ureidoacrylate + H2O = (Z)-3-aminoacrylate + carbamate + H(+). It carries out the reaction (Z)-2-methylureidoacrylate + H2O + H(+) = (Z)-2-methylaminoacrylate + NH4(+) + CO2. In terms of biological role, hydrolyzes ureidoacrylate to form aminoacrylate and carbamate. The carbamate hydrolyzes spontaneously, thereby releasing one of the nitrogen atoms of the pyrimidine ring as ammonia and one of its carbon atoms as CO2. This chain is Ureidoacrylate amidohydrolase RutB, found in Yersinia enterocolitica serotype O:8 / biotype 1B (strain NCTC 13174 / 8081).